A 346-amino-acid chain; its full sequence is Probable dual-specificity RNA methyltransferase RlmN (346 aa).

E91 acts as the Proton acceptor in catalysis. The 229-residue stretch at 97–325 folds into the Radical SAM core domain; that stretch reads TEKRLTVCVS…VSVRYSKGLE (229 aa). A disulfide bridge links C104 with C330. Positions 111, 115, and 118 each coordinate [4Fe-4S] cluster. Residues 158-159, S188, 211-213, and N287 contribute to the S-adenosyl-L-methionine site; these read GE and SLH. The active-site S-methylcysteine intermediate is C330.

It belongs to the radical SAM superfamily. RlmN family. It depends on [4Fe-4S] cluster as a cofactor.

The protein localises to the cytoplasm. It carries out the reaction adenosine(2503) in 23S rRNA + 2 reduced [2Fe-2S]-[ferredoxin] + 2 S-adenosyl-L-methionine = 2-methyladenosine(2503) in 23S rRNA + 5'-deoxyadenosine + L-methionine + 2 oxidized [2Fe-2S]-[ferredoxin] + S-adenosyl-L-homocysteine. It catalyses the reaction adenosine(37) in tRNA + 2 reduced [2Fe-2S]-[ferredoxin] + 2 S-adenosyl-L-methionine = 2-methyladenosine(37) in tRNA + 5'-deoxyadenosine + L-methionine + 2 oxidized [2Fe-2S]-[ferredoxin] + S-adenosyl-L-homocysteine. Specifically methylates position 2 of adenine 2503 in 23S rRNA and position 2 of adenine 37 in tRNAs. The chain is Probable dual-specificity RNA methyltransferase RlmN from Picosynechococcus sp. (strain ATCC 27264 / PCC 7002 / PR-6) (Agmenellum quadruplicatum).